We begin with the raw amino-acid sequence, 169 residues long: uncharacterized protein (169 aa).

In terms of domain architecture, Nudix hydrolase spans Cys-32–Leu-162. A Nudix box motif is present at residues Gly-69–Asn-91. Mg(2+) is bound by residues Glu-85 and Glu-89.

It belongs to the Nudix hydrolase family. Requires Mg(2+) as cofactor.

This is an uncharacterized protein from Nostoc sp. (strain PCC 7120 / SAG 25.82 / UTEX 2576).